The sequence spans 104 residues: Secretoglobin family 3A member 1 (104 aa).

The first 21 residues, 1–21 (MKLTTTFLVLCVALLSDSGVA), serve as a signal peptide directing secretion.

It belongs to the secretoglobin family. UGRP subfamily. As to quaternary structure, homodimer; disulfide-linked. As to expression, highly expressed in lung, where it localizes to epithelial cells lining the trachea and bronchi. Expression in lung is mainly restricted to bronchi, submucosal glands of the trachea, and tracheal epithelium, with little expression in terminal bronchioles. Expressed in uterus where it localizes to epithelial cells of the uterine glands. Also detected in heart, stomach and small intestine.

It is found in the secreted. Functionally, secreted cytokine-like protein. Inhibits cell growth in vitro. This is Secretoglobin family 3A member 1 (Scgb3a1) from Mus musculus (Mouse).